Consider the following 710-residue polypeptide: Polyribonucleotide nucleotidyltransferase (710 aa).

Mg(2+) is bound by residues Asp489 and Asp495. The KH domain occupies 556–615; the sequence is PKIDTIKIDVDKIKVVIGKGGETIDKIIAETGVKIDIDDEGNVSIYSSDQAAIDRTKEII. Residues 625-693 form the S1 motif domain; the sequence is GEVYHAKVVR…EKGRVDASMK (69 aa). A disordered region spans residues 691–710; that stretch reads SMKALIPRPPKPEKKEEKHD. Basic and acidic residues predominate over residues 700 to 710; sequence PKPEKKEEKHD.

It belongs to the polyribonucleotide nucleotidyltransferase family. The cofactor is Mg(2+).

It is found in the cytoplasm. The enzyme catalyses RNA(n+1) + phosphate = RNA(n) + a ribonucleoside 5'-diphosphate. Its function is as follows. Involved in mRNA degradation. Catalyzes the phosphorolysis of single-stranded polyribonucleotides processively in the 3'- to 5'-direction. The sequence is that of Polyribonucleotide nucleotidyltransferase from Streptococcus pyogenes serotype M1.